The sequence spans 302 residues: Urease accessory protein UreD 2 (302 aa).

The protein belongs to the UreD family. UreD, UreF and UreG form a complex that acts as a GTP-hydrolysis-dependent molecular chaperone, activating the urease apoprotein by helping to assemble the nickel containing metallocenter of UreC. The UreE protein probably delivers the nickel.

The protein resides in the cytoplasm. Functionally, required for maturation of urease via the functional incorporation of the urease nickel metallocenter. In Brucella canis (strain ATCC 23365 / NCTC 10854 / RM-666), this protein is Urease accessory protein UreD 2.